The primary structure comprises 119 residues: Large ribosomal subunit protein uL22 (119 aa).

Belongs to the universal ribosomal protein uL22 family. In terms of assembly, part of the 50S ribosomal subunit.

Functionally, this protein binds specifically to 23S rRNA; its binding is stimulated by other ribosomal proteins, e.g. L4, L17, and L20. It is important during the early stages of 50S assembly. It makes multiple contacts with different domains of the 23S rRNA in the assembled 50S subunit and ribosome. Its function is as follows. The globular domain of the protein is located near the polypeptide exit tunnel on the outside of the subunit, while an extended beta-hairpin is found that lines the wall of the exit tunnel in the center of the 70S ribosome. The polypeptide is Large ribosomal subunit protein uL22 (Rickettsia conorii (strain ATCC VR-613 / Malish 7)).